The following is a 264-amino-acid chain: uncharacterized protein (264 aa).

The chain crosses the membrane as a helical span at residues Leu7 to Thr27.

This sequence belongs to the staphylococcal tandem lipoprotein family.

Its subcellular location is the cell membrane. This is an uncharacterized protein from Staphylococcus aureus (strain MW2).